Reading from the N-terminus, the 26-residue chain is Thrombin-like enzyme LmrSP-3 (26 aa).

The protein belongs to the peptidase S1 family. Snake venom subfamily. As to expression, expressed by the venom gland.

It localises to the secreted. Functionally, thrombin-like snake venom serine protease that cleaves alpha-chain of fibrinogen (FGA) releases only fibrinopeptide A. Shows coagulant, esterase and amidase activities. This chain is Thrombin-like enzyme LmrSP-3, found in Lachesis muta rhombeata (Bushmaster).